The following is a 346-amino-acid chain: MTRLCRTFQTAPAAIPNDNSAKFLVSGLTSKGFQAPDWLVPDIEDGTAPSMKDEAVDNIIEHIPDHADDFAGDILPRVEWAYDDANARERGIEQVTRLAEAVGEELDGFVFPKVGRLDDVRDAAGVIADAERDAGLPEGTLEMAIILETAPGRSDLREICQYATDSRLSGLVFGPVDYTAELGGRTLDGERPRWDGLLEALSNETSAADIVAIGGPFDQLFHERAGVTYYNAEGYADQVAYEATIGIDGSWSLHPKQTEQANRIHMPTVEEMERDLHKIESFNEAKREGTGAVVVDGQMVDEATYKNFANTVKTVRAIDETHPAQTEAYYDDDLLARARDVELIFG.

The Mg(2+) site is built by glutamate 148 and aspartate 177. Residues 176 to 177 (VD) and 253 to 254 (LH) contribute to the substrate site.

It belongs to the HpcH/HpaI aldolase family. The cofactor is Mg(2+). Requires Mn(2+) as cofactor.

The catalysed reaction is (S)-malyl-CoA = glyoxylate + acetyl-CoA. It catalyses the reaction (2R,3S)-beta-methylmalyl-CoA = propanoyl-CoA + glyoxylate. Functionally, involved in the methylaspartate cycle. Catalyzes the reversible cleavage of beta-methylmalyl-CoA to propionyl-CoA and glyoxylate, as well as the reversible cleavage of (S)-malyl-CoA to acetyl-CoA and glyoxylate. In addition, it has a small malyl-CoA thioesterase activity. It can also catalyze the cleavage of (S)-citramalyl-CoA to acetyl-CoA and pyruvate. This chain is L-malyl-CoA/beta-methylmalyl-CoA lyase (citE1), found in Haloarcula marismortui (strain ATCC 43049 / DSM 3752 / JCM 8966 / VKM B-1809) (Halobacterium marismortui).